The primary structure comprises 95 residues: Putative septation protein SpoVG (95 aa).

Belongs to the SpoVG family.

Its function is as follows. Could be involved in septation. The sequence is that of Putative septation protein SpoVG from Clostridium botulinum (strain ATCC 19397 / Type A).